Here is a 689-residue protein sequence, read N- to C-terminus: Glycine--tRNA ligase beta subunit (689 aa).

It belongs to the class-II aminoacyl-tRNA synthetase family. In terms of assembly, tetramer of two alpha and two beta subunits.

It localises to the cytoplasm. It carries out the reaction tRNA(Gly) + glycine + ATP = glycyl-tRNA(Gly) + AMP + diphosphate. This chain is Glycine--tRNA ligase beta subunit, found in Dictyoglomus turgidum (strain DSM 6724 / Z-1310).